Here is a 50-residue protein sequence, read N- to C-terminus: uncharacterized protein (50 aa).

A disordered region spans residues methionine 1 to lysine 50. Positions glycine 35 to lysine 50 are enriched in polar residues.

This is an uncharacterized protein from Treponema pallidum (strain Nichols).